The following is a 98-amino-acid chain: Large ribosomal subunit protein uL23c (98 aa).

This sequence belongs to the universal ribosomal protein uL23 family. As to quaternary structure, part of the 50S ribosomal subunit.

It localises to the plastid. Its function is as follows. Binds to 23S rRNA. The protein is Large ribosomal subunit protein uL23c (rpl23) of Euglena longa (Euglenophycean alga).